A 715-amino-acid chain; its full sequence is Palmitoyltransferase ZDHHC5 (715 aa).

Topologically, residues 1–13 (MPAESGKRFKPSK) are cytoplasmic. Residues 14–34 (YVPVSAAAIFLVGATTLFFAF) form a helical membrane-spanning segment. Residues 35–38 (TCPG) are Extracellular-facing. A helical membrane pass occupies residues 39-59 (LSLYVSPAVPIYNAIMFLFVL). Residues 60-148 (ANFSMATFMD…NCIGRRNYRY (89 aa)) lie on the Cytoplasmic side of the membrane. Tyrosine 91 is modified (phosphotyrosine; by LYN). The region spanning 104-154 (KWCATCRFYRPPRCSHCSVCDNCVEEFDHHCPWVNNCIGRRNYRYFFLFLL) is the DHHC domain. Cysteine 134 serves as the catalytic S-palmitoyl cysteine intermediate. A helical transmembrane segment spans residues 149–169 (FFLFLLSLTAHIMGVFGFGLL). Residues 170-191 (YVLYHIEELSGVRTAVTMAVMC) lie on the Extracellular side of the membrane. The chain crosses the membrane as a helical span at residues 192 to 212 (VAGLFFIPVAGLTGFHVVLVA). Over 213 to 715 (RGRTTNEQVT…VGGTTYEISV (503 aa)) the chain is Cytoplasmic. The residue at position 247 (serine 247) is a Phosphoserine. The tract at residues 289 to 715 (GELRRTKSKG…VGGTTYEISV (427 aa)) is disordered. Threonine 294 carries the post-translational modification Phosphothreonine. A phosphoserine mark is found at serine 296 and serine 299. Residue threonine 303 is modified to Phosphothreonine. Residue serine 345 is modified to Phosphoserine. Residues threonine 348 and threonine 350 each carry the phosphothreonine modification. Positions 359–373 (SSSSTSAAMPHSSSA) are enriched in low complexity. Serine 380, serine 398, serine 406, and serine 409 each carry phosphoserine. At threonine 411 the chain carries Phosphothreonine. Residues serine 415, serine 425, serine 429, and serine 432 each carry the phosphoserine modification. A compositionally biased stretch (low complexity) spans 422-432 (SSGSRSSSLKS). Threonine 436 is subject to Phosphothreonine. Residues 442 to 478 (QLQSIRSEGTTSTSYKSLANQTRNGSLSYDSLLTPSD) show a composition bias toward polar residues. Serine 529 carries the phosphoserine modification. Tyrosine 533 is subject to Phosphotyrosine; by FYN. Phosphoserine is present on serine 554. Arginine 617 is modified (omega-N-methylarginine). Position 621 is a phosphoserine (serine 621). Threonine 659 bears the Phosphothreonine mark. Positions 666–677 (LKTTYSKSNGQP) are enriched in polar residues. Serine 684 and serine 694 each carry phosphoserine. Position 697 is an omega-N-methylarginine (arginine 697).

This sequence belongs to the DHHC palmitoyltransferase family. ERF2/ZDHHC9 subfamily. In terms of processing, phosphorylation regulates association with endocytic proteins and its subcellular localization. Phosphorylation by LYN during fatty acid uptake leads to inactivation of the activity. Post-translationally, autopalmitoylated. Palmitoylation of the C-terminal tail regulates stimulation-dependent plasma membrane motility.

Its subcellular location is the cell membrane. The protein localises to the synapse. The catalysed reaction is L-cysteinyl-[protein] + hexadecanoyl-CoA = S-hexadecanoyl-L-cysteinyl-[protein] + CoA. Palmitoyltransferase that catalyzes the addition of palmitate onto various protein substrates such as CTNND2, CD36, GSDMD, NLRP3, NOD1, NOD2, STAT3 and S1PR1 thus plays a role in various biological processes including cell adhesion, inflammation, fatty acid uptake, bacterial sensing or cardiac functions. Plays an important role in the regulation of synapse efficacy by mediating palmitoylation of delta-catenin/CTNND2, thereby increasing synaptic delivery and surface stabilization of alpha-amino-3-hydroxy-5-methyl-4-isoxazole propionic acid receptors (AMPARs). Under basal conditions, remains at the synaptic membrane through FYN-mediated phosphorylation that prevents association with endocytic proteins. Neuronal activity enhances the internalization and trafficking of DHHC5 from spines to dendritic shafts where it palmitoylates delta-catenin/CTNND2. Regulates cell adhesion at the plasma membrane by palmitoylating GOLGA7B and DSG2. Plays a role in innate immune response by mediating the palmitoylation of NOD1 and NOD2 and their proper recruitment to the bacterial entry site and phagosomes. Also participates in fatty acid uptake by palmitoylating CD36 and thereby targeting it to the plasma membrane. Upon binding of fatty acids to CD36, gets phosphorylated by LYN leading to inactivation and subsequent CD36 caveolar endocytosis. Controls oligodendrocyte development by catalyzing STAT3 palmitoylation. Acts as a regulator of inflammatory response by mediating palmitoylation of NLRP3 and GSDMD. Palmitoylates NLRP3 to promote inflammasome assembly and activation. Activates pyroptosis by catalyzing palmitoylation of gasdermin-D (GSDMD), thereby promoting membrane translocation and pore formation of GSDMD. The protein is Palmitoyltransferase ZDHHC5 of Homo sapiens (Human).